The chain runs to 328 residues: GMP reductase (328 aa).

Cys176 functions as the Thioimidate intermediate in the catalytic mechanism. 205-228 (IIADGGIRTHGDIAKSIRFGASMV) contributes to the NADP(+) binding site.

It belongs to the IMPDH/GMPR family. GuaC type 2 subfamily.

It carries out the reaction IMP + NH4(+) + NADP(+) = GMP + NADPH + 2 H(+). Catalyzes the irreversible NADPH-dependent deamination of GMP to IMP. It functions in the conversion of nucleobase, nucleoside and nucleotide derivatives of G to A nucleotides, and in maintaining the intracellular balance of A and G nucleotides. This Streptococcus pneumoniae (strain Hungary19A-6) protein is GMP reductase.